The sequence spans 892 residues: MSQQTTIRKLAELVNTPVEKLLEQLAGAGMKFSGPDQVVTSTEKMKLLGFLRRTHGKSDVSVGTVREAPKKITLNRRRLQEVTVNAGRNKTTVNVEVRQKRTYVKPPESEYHTPTKPPIELADAERVEILRKLEESRQRNLAEQQRLAEVDRQRVEEQERKRREEEQAELERQKTESRVVEEILVKTDSNSVKPVSKPISEERTRALPRTVRPTPAARPSVSRSDDRNSNGGVRHKARGSHVIVSDEDDSARRFAGQMHLTAAERARRGSNTRGKGGGSHRSATHRGNENSIRSSGAHGFERPTVAVVREVAVGDTITVADLAQKLALKSGDMVKALFKMGVMVTITQTIDHDTAVLVSEELGHKVTRASSSDFEDALLAHTEELHGEPVPRPPVVTIMGHVDHGKTSLLDYIRRTKIAVGEAGGITQHIGAYHVETPRGVISFLDTPGHAAFTSMRARGAKITDIVVLVVAADDGVMPQTKEAVQHARAAGVPLIVAVSKIDKSTADPQRVKNELLTESVVAEEFGGDTQFVELSAKTGVGVDALLDAISIQAEVLELKAVIEGRATGTVIESSLDKGRGPVATVLVQQGRLKKGDYLVCGTHYGRVRALFDEVGHQPLAASPSIPVQVLGLSGVPDAGDDFVVVDDERLAKDVAQQREAKRRESRLVTSAGNRMEDILAQMGKGENQQVLNLLIKADVQGSLEALKQALVALSNDDIRINVIHVGVGGITESDANSAVTSKATVIGFNVRADASARKIIEVNGVDLRYFSIIYDVIDQVKQVASGLLGVEIREEIIGVAEVRDVFRSSKFGAVAGCMIIEGVVKRSKPIRVLRDNTVVFEGELESLRRFKENVDEVRNSIECGIGVKAYNDVRVGDSIECFERIEVARTL.

The segment covering 138–185 (QRNLAEQQRLAEVDRQRVEEQERKRREEEQAELERQKTESRVVEEILV) has biased composition (basic and acidic residues). 2 disordered regions span residues 138–250 (QRNL…EDDS) and 262–298 (AAER…SGAH). Low complexity predominate over residues 207-219 (LPRTVRPTPAARP). Residues 391–560 (PRPPVVTIMG…SIQAEVLELK (170 aa)) form the tr-type G domain. GTP is bound by residues 400-407 (GHVDHGKT), 446-450 (DTPGH), and 500-503 (SKID).

This sequence belongs to the TRAFAC class translation factor GTPase superfamily. Classic translation factor GTPase family. IF-2 subfamily.

It localises to the cytoplasm. One of the essential components for the initiation of protein synthesis. Protects formylmethionyl-tRNA from spontaneous hydrolysis and promotes its binding to the 30S ribosomal subunits. Also involved in the hydrolysis of GTP during the formation of the 70S ribosomal complex. This is Translation initiation factor IF-2 from Xylella fastidiosa (strain Temecula1 / ATCC 700964).